Here is a 337-residue protein sequence, read N- to C-terminus: GTPase Obg (337 aa).

Residues 1–159 enclose the Obg domain; the sequence is MDFIDEVKLY…RNIVLKLKVL (159 aa). The region spanning 160 to 329 is the OBG-type G domain; sequence SDVGIIGMPN…LNEKVKTKEI (170 aa). Residues 166–173, 191–195, 212–215, 279–282, and 310–312 each bind GTP; these read GMPNVGKS, FTTIR, DIPG, NKCD, and DDD. Residues Ser173 and Thr193 each contribute to the Mg(2+) site.

This sequence belongs to the TRAFAC class OBG-HflX-like GTPase superfamily. OBG GTPase family. In terms of assembly, monomer. It depends on Mg(2+) as a cofactor.

It is found in the cytoplasm. Functionally, an essential GTPase which binds GTP, GDP and possibly (p)ppGpp with moderate affinity, with high nucleotide exchange rates and a fairly low GTP hydrolysis rate. Plays a role in control of the cell cycle, stress response, ribosome biogenesis and in those bacteria that undergo differentiation, in morphogenesis control. The polypeptide is GTPase Obg (Wolbachia pipientis subsp. Culex pipiens (strain wPip)).